A 1057-amino-acid chain; its full sequence is Probable E3 ubiquitin-protein ligase HERC4 (1057 aa).

RCC1 repeat units follow at residues Met1–Asp51, Asp52–Asp101, Lys102–Lys154, Ser156–Leu207, Ser208–Lys259, Gly261–Pro311, and Ser313–Phe368. The HECT domain maps to Lys730–Ile1057. Cys1025 (glycyl thioester intermediate) is an active-site residue.

In terms of tissue distribution, expressed in brain and testis and detected in heart and placenta.

It localises to the cytoplasm. It is found in the cytosol. It carries out the reaction S-ubiquitinyl-[E2 ubiquitin-conjugating enzyme]-L-cysteine + [acceptor protein]-L-lysine = [E2 ubiquitin-conjugating enzyme]-L-cysteine + N(6)-ubiquitinyl-[acceptor protein]-L-lysine.. The protein operates within protein modification; protein ubiquitination. Probable E3 ubiquitin-protein ligase involved in either protein trafficking or in the distribution of cellular structures. Required for spermatozoon maturation and fertility, and for the removal of the cytoplasmic droplet of the spermatozoon. E3 ubiquitin-protein ligases accept ubiquitin from an E2 ubiquitin-conjugating enzyme in the form of a thioester and then directly transfer it to targeted substrates. The polypeptide is Probable E3 ubiquitin-protein ligase HERC4 (HERC4) (Homo sapiens (Human)).